Consider the following 117-residue polypeptide: Ribonuclease P protein component (117 aa).

The protein belongs to the RnpA family. As to quaternary structure, consists of a catalytic RNA component (M1 or rnpB) and a protein subunit.

It carries out the reaction Endonucleolytic cleavage of RNA, removing 5'-extranucleotides from tRNA precursor.. RNaseP catalyzes the removal of the 5'-leader sequence from pre-tRNA to produce the mature 5'-terminus. It can also cleave other RNA substrates such as 4.5S RNA. The protein component plays an auxiliary but essential role in vivo by binding to the 5'-leader sequence and broadening the substrate specificity of the ribozyme. This is Ribonuclease P protein component from Aliivibrio fischeri (strain ATCC 700601 / ES114) (Vibrio fischeri).